Consider the following 264-residue polypeptide: Thymidylate synthase (264 aa).

Residue Arg21 coordinates dUMP. His51 is a (6R)-5,10-methylene-5,6,7,8-tetrahydrofolate binding site. 126–127 is a binding site for dUMP; the sequence is RR. The Nucleophile role is filled by Cys146. Residues 166–169, Asn177, and 207–209 each bind dUMP; these read RSCD and HLY. Asp169 lines the (6R)-5,10-methylene-5,6,7,8-tetrahydrofolate pocket. Residue Ala263 coordinates (6R)-5,10-methylene-5,6,7,8-tetrahydrofolate.

Belongs to the thymidylate synthase family. Bacterial-type ThyA subfamily. Homodimer.

Its subcellular location is the cytoplasm. The catalysed reaction is dUMP + (6R)-5,10-methylene-5,6,7,8-tetrahydrofolate = 7,8-dihydrofolate + dTMP. It participates in pyrimidine metabolism; dTTP biosynthesis. In terms of biological role, catalyzes the reductive methylation of 2'-deoxyuridine-5'-monophosphate (dUMP) to 2'-deoxythymidine-5'-monophosphate (dTMP) while utilizing 5,10-methylenetetrahydrofolate (mTHF) as the methyl donor and reductant in the reaction, yielding dihydrofolate (DHF) as a by-product. This enzymatic reaction provides an intracellular de novo source of dTMP, an essential precursor for DNA biosynthesis. In Yersinia pseudotuberculosis serotype O:1b (strain IP 31758), this protein is Thymidylate synthase.